We begin with the raw amino-acid sequence, 68 residues long: Neuronal regeneration-related protein (68 aa).

The interval 21 to 54 is disordered; it reads MEGRLPKGRLPVPKEVNRKKNDETNAASLTPLGS. The segment covering 44–54 has biased composition (polar residues); it reads TNAASLTPLGS.

In terms of assembly, interacts with the latency-associated peptides (LAP) of TGFB1 and TGFB2; the interaction results in a decrease in TGFB autoinduction. Interacts with FLNA. Phosphorylated on Ser-59. Phosphorylation decreases stability and activity.

It localises to the cytoplasm. May have roles in neural function and cellular differentiation. Ectopic expression promotes axonal regeneration, induces differentiation of fibroblast into myofibroblast, induces myofibroblast ameboid migration, augments motility of gliomas, and increases retinoic-acid regulation of lipid-droplet biogenesis. Down-regulates the expression of TGFB1 and TGFB2 but not of TGFB3. May play a role in the regulation of alveolar generation. This chain is Neuronal regeneration-related protein (NREP), found in Pongo abelii (Sumatran orangutan).